Consider the following 160-residue polypeptide: Phosphopantetheine adenylyltransferase (160 aa).

Ser10 provides a ligand contact to substrate. ATP contacts are provided by residues 10-11 (SF) and His18. The substrate site is built by Lys42, Thr74, and Arg88. Residues 89 to 91 (GLR), Glu99, and 124 to 130 (YSFISST) each bind ATP.

This sequence belongs to the bacterial CoaD family. In terms of assembly, homohexamer. Mg(2+) is required as a cofactor.

The protein localises to the cytoplasm. It catalyses the reaction (R)-4'-phosphopantetheine + ATP + H(+) = 3'-dephospho-CoA + diphosphate. Its pathway is cofactor biosynthesis; coenzyme A biosynthesis; CoA from (R)-pantothenate: step 4/5. Functionally, reversibly transfers an adenylyl group from ATP to 4'-phosphopantetheine, yielding dephospho-CoA (dPCoA) and pyrophosphate. In Leptospira interrogans serogroup Icterohaemorrhagiae serovar copenhageni (strain Fiocruz L1-130), this protein is Phosphopantetheine adenylyltransferase.